The primary structure comprises 123 residues: Small ribosomal subunit protein uS12 (123 aa).

3-methylthioaspartic acid is present on Asp89. A disordered region spans residues 101–123 (TLDTQGVKDRRQRRSKYGAKRPK). A compositionally biased stretch (basic residues) spans 110–123 (RRQRRSKYGAKRPK).

This sequence belongs to the universal ribosomal protein uS12 family. As to quaternary structure, part of the 30S ribosomal subunit. Contacts proteins S8 and S17. May interact with IF1 in the 30S initiation complex.

Functionally, with S4 and S5 plays an important role in translational accuracy. In terms of biological role, interacts with and stabilizes bases of the 16S rRNA that are involved in tRNA selection in the A site and with the mRNA backbone. Located at the interface of the 30S and 50S subunits, it traverses the body of the 30S subunit contacting proteins on the other side and probably holding the rRNA structure together. The combined cluster of proteins S8, S12 and S17 appears to hold together the shoulder and platform of the 30S subunit. This is Small ribosomal subunit protein uS12 from Paramagnetospirillum magneticum (strain ATCC 700264 / AMB-1) (Magnetospirillum magneticum).